The following is a 926-amino-acid chain: Nitrate reductase [NADH] (926 aa).

The interval 1-85 (MAASVDRQYH…SDSEEDDDEN (85 aa)) is disordered. Polar residues predominate over residues 36–46 (YTFSNPPSSNG). The segment covering 58-73 (DNNSNSNNGSNNNNNR) has biased composition (low complexity). Cysteine 204 serves as a coordination point for Mo-molybdopterin. The Cytochrome b5 heme-binding domain maps to 551–626 (SKMYSMSEVK…LEDFRIGELI (76 aa)). Histidine 586 and histidine 609 together coordinate heme. In terms of domain architecture, FAD-binding FR-type spans 670-782 (RVKIPCKLIE…KGPLGHIEYL (113 aa)). FAD is bound by residues 722–725 (RAYT), 739–743 (VVKVY), phenylalanine 744, phenylalanine 751, 756–758 (VMS), and threonine 809.

This sequence belongs to the nitrate reductase family. In terms of assembly, homodimer. It depends on FAD as a cofactor. Heme is required as a cofactor. Requires Mo-molybdopterin as cofactor.

The catalysed reaction is nitrite + NAD(+) + H2O = nitrate + NADH + H(+). Nitrate reductase is a key enzyme involved in the first step of nitrate assimilation in plants, fungi and bacteria. This is Nitrate reductase [NADH] (NIA) from Spinacia oleracea (Spinach).